Consider the following 117-residue polypeptide: Eukaryotic translation initiation factor 4E-binding protein (117 aa).

Residues threonine 37 and threonine 46 each carry the phosphothreonine modification. The YXXXXLphi motif; atypical motif lies at 54-60 (YERAFMK). A Phosphoserine modification is found at serine 65. Threonine 70 carries the post-translational modification Phosphothreonine.

Belongs to the eIF4E-binding protein family. As to quaternary structure, hypophosphorylated Thor/4E-BP competes with eIF4G1 to interact with eIF4E1; insulin stimulated Akt1 or Tor phosphorylation of Thor/4E-BP causes dissociation of the complex allowing eIF4G1 to bind and consequent initiation of translation. Phosphorylation at Thr-37, Thr-46, Ser-65 and Thr-70, corresponding to the hyperphosphorylated form, impairs its ability to prevent the interaction between eIF4G1 and eIF4E1, without affecting its interaction with free eIF4E1. Phosphorylated in rtesponse to insulin. Phosphorylation at Thr-46 is regulated by Tor and constitutes the major phosphorylation event that regulates activity. Widely expressed.

Its function is as follows. Repressor of translation initiation that regulates eIF4E1 activity by preventing its assembly into the eIF4F complex. Hypophosphorylated form competes with eIF4G1 and strongly binds to eIF4E1, leading to repress translation. In contrast, hyperphosphorylated form dissociates from eIF4E1, allowing interaction between eIF4G1 and eIF4E1, leading to initiation of translation. Acts as a regulator of various biological processes, such as innate immunity, cell growth or synaptic transmission. Acts downstream of phosphoinositide-3-kinase (PI3K) to regulate cell growth. Extends lifespan upon dietary restriction by regulating the mitochondrial translation. Acts as a regulator of lifespan in response to cold by regulating the mitochondrial translation. Acts as a negative regulator of presynaptic release of neurotransmitter in motor neurons: Thor expression is induced in response to insulin signaling, leading to prevent of translation of complexin (cpx), a protein known to regulate the exocytosis of synaptic vesicles. Acts as a negative regulator of synaptic strength at the neuromuscular junction: Thor expression in response to acute fasting prevents translation, thereby suppressing retrograde synaptic enhancement. The chain is Eukaryotic translation initiation factor 4E-binding protein from Drosophila melanogaster (Fruit fly).